A 148-amino-acid chain; its full sequence is Lysozyme C (148 aa).

The signal sequence occupies residues 1–18; sequence MKAVIILGLVLLSVTVQG. The C-type lysozyme domain maps to 19–148; the sequence is KIFERCELAR…VSQYVQGCGV (130 aa). 4 disulfides stabilise this stretch: C24/C146, C48/C134, C83/C99, and C95/C113. Residues E53 and D71 contribute to the active site.

It belongs to the glycosyl hydrolase 22 family. In terms of assembly, monomer.

The protein resides in the secreted. The enzyme catalyses Hydrolysis of (1-&gt;4)-beta-linkages between N-acetylmuramic acid and N-acetyl-D-glucosamine residues in a peptidoglycan and between N-acetyl-D-glucosamine residues in chitodextrins.. Lysozymes have primarily a bacteriolytic function; those in tissues and body fluids are associated with the monocyte-macrophage system and enhance the activity of immunoagents. This Macaca mulatta (Rhesus macaque) protein is Lysozyme C (LYZ).